A 184-amino-acid polypeptide reads, in one-letter code: ATP synthase subunit delta (184 aa).

This sequence belongs to the ATPase delta chain family. As to quaternary structure, F-type ATPases have 2 components, F(1) - the catalytic core - and F(0) - the membrane proton channel. F(1) has five subunits: alpha(3), beta(3), gamma(1), delta(1), epsilon(1). CF(0) has four main subunits: a(1), b(1), b'(1) and c(10-14). The alpha and beta chains form an alternating ring which encloses part of the gamma chain. F(1) is attached to F(0) by a central stalk formed by the gamma and epsilon chains, while a peripheral stalk is formed by the delta, b and b' chains.

The protein localises to the cell inner membrane. Its function is as follows. F(1)F(0) ATP synthase produces ATP from ADP in the presence of a proton or sodium gradient. F-type ATPases consist of two structural domains, F(1) containing the extramembraneous catalytic core and F(0) containing the membrane proton channel, linked together by a central stalk and a peripheral stalk. During catalysis, ATP synthesis in the catalytic domain of F(1) is coupled via a rotary mechanism of the central stalk subunits to proton translocation. In terms of biological role, this protein is part of the stalk that links CF(0) to CF(1). It either transmits conformational changes from CF(0) to CF(1) or is implicated in proton conduction. This Erythrobacter litoralis (strain HTCC2594) protein is ATP synthase subunit delta.